Reading from the N-terminus, the 485-residue chain is Adenosylhomocysteinase (485 aa).

Substrate contacts are provided by threonine 64, aspartate 139, and glutamate 205. Residue 206 to 208 (TTT) coordinates NAD(+). Residues lysine 235 and aspartate 239 each coordinate substrate. NAD(+) is bound by residues asparagine 240, 269–274 (GYGDVG), glutamate 292, asparagine 327, 348–350 (IGH), and asparagine 397.

Belongs to the adenosylhomocysteinase family. NAD(+) serves as cofactor.

It carries out the reaction S-adenosyl-L-homocysteine + H2O = L-homocysteine + adenosine. Its pathway is amino-acid biosynthesis; L-homocysteine biosynthesis; L-homocysteine from S-adenosyl-L-homocysteine: step 1/1. In terms of biological role, adenosylhomocysteine is a competitive inhibitor of S-adenosyl-L-methionine-dependent methyl transferase reactions; therefore adenosylhomocysteinase may play a key role in the control of methylations via regulation of the intracellular concentration of adenosylhomocysteine. In Lupinus luteus (European yellow lupine), this protein is Adenosylhomocysteinase (SAHH).